Consider the following 474-residue polypeptide: MASPTISSMEQYTPSSKDEKIVPLHGDAAGSDTEKGESREVFQENVDGVEFRTVSWQRATVVFLKINFAMSILAIPGALGALGSVGGSLCIVGYTSLNVYTALVLGDFKHNHTECHTLADMMGLIWGRWGRELVGVQIIVAQVLISAGGIVTSAIGLNALSDHGTCTVMFALVSAILITLFSSIRTFARLGWLTWFGFITFVLGVFIFVVAVTQVDRPAAAPKTGDFELGWAPIAYPSFVVGMINATNIFISTCGSSMFLPVISEMKRPHDYRKACLVAGFIVGAMYLSFSLVIYRWCGTWISTPAFGSAGPLIKKVAYGVSLPGLILGVGIYQHVAAKYAFVRILRDSEHLQANTFTHWGTWLGINLALGTAAFIVAEAVPILNYLLGLAGSLCFAPFSLVFPALLWMYDFKSYKTGTLGQKIKYGLHILIMILGFYMIVAGTYSVAVLIKEAFNTGAIAKVFDCADNSGFVQ.

Residues 1–15 (MASPTISSMEQYTPS) are compositionally biased toward polar residues. A disordered region spans residues 1–39 (MASPTISSMEQYTPSSKDEKIVPLHGDAAGSDTEKGESR). 10 consecutive transmembrane segments (helical) span residues 72–92 (ILAIPGALGALGSVGGSLCIV), 133–153 (LVGVQIIVAQVLISAGGIVTS), 164–184 (GTCTVMFALVSAILITLFSSI), 192–212 (WLTWFGFITFVLGVFIFVVAV), 231–251 (WAPIAYPSFVVGMINATNIFI), 275–295 (ACLVAGFIVGAMYLSFSLVIY), 317–337 (VAYGVSLPGLILGVGIYQHVA), 364–384 (LGINLALGTAAFIVAEAVPIL), 387–407 (LLGLAGSLCFAPFSLVFPALL), and 431–451 (LIMILGFYMIVAGTYSVAVLI).

It belongs to the amino acid/polyamine transporter 2 family.

The protein resides in the membrane. Functionally, transmembrane transporter; part of the Fusarium detoxification of benzoxazolinone cluster 2 (FDB2) involved in the degradation of benzoxazolinones produced by the host plant. Maize, wheat, and rye produce the 2 benzoxazinone phytoanticipins 2,4-dihy-droxy-7-methoxy-1,4-benzoxazin-3-one (DIMBOA) and 2,4-dihydroxy-1,4-benzoxazin-3-one (DIBOA) that, due to their inherent instability once released, spontaneously degrade to the more stable corresponding benzoxazolinones, 6-methoxy-2-benzoxazolinone (MBOA) and 2-benzoxazolinone (BOA), respectively. Might be involved in the transport of metabolites of benzoxazolinone degradation. The polypeptide is Transmembrane transporter FVEG_12640 (Gibberella moniliformis (strain M3125 / FGSC 7600) (Maize ear and stalk rot fungus)).